A 204-amino-acid polypeptide reads, in one-letter code: Small ribosomal subunit protein uS4 (204 aa).

A disordered region spans residues 22–43 (SGKELARRPYAPGDHGNTGRRP). The 61-residue stretch at 94-154 (TRLDSVVFRL…ERSKKIVPIL (61 aa)) folds into the S4 RNA-binding domain.

This sequence belongs to the universal ribosomal protein uS4 family. Part of the 30S ribosomal subunit. Contacts protein S5. The interaction surface between S4 and S5 is involved in control of translational fidelity.

One of the primary rRNA binding proteins, it binds directly to 16S rRNA where it nucleates assembly of the body of the 30S subunit. Functionally, with S5 and S12 plays an important role in translational accuracy. The polypeptide is Small ribosomal subunit protein uS4 (Oenococcus oeni (strain ATCC BAA-331 / PSU-1)).